The primary structure comprises 484 residues: Sperm motility kinase 1 (484 aa).

The region spanning 8-256 is the Protein kinase domain; the sequence is YEMLETIGQG…VAEVMVHPWI (249 aa). ATP is bound by residues 14-22 and lysine 37; that span reads IGQGGCAKV. Aspartate 127 functions as the Proton acceptor in the catalytic mechanism. Residues 274–314 form the UBA domain; sequence KPDPAIVKPMGHIGFQAQDIEDSLRQRKFNETMASYCLLKK. A compositionally biased stretch (polar residues) spans 423–434; that stretch reads IDESTEGHTSAS. Residues 423–447 are disordered; the sequence is IDESTEGHTSASAEDKPVHSRGWPR.

The protein belongs to the protein kinase superfamily. Tyr protein kinase family. Smok subfamily. As to expression, testis-specific. Expressed in the testis from 22 days postpartum (22 dpp).

It catalyses the reaction L-seryl-[protein] + ATP = O-phospho-L-seryl-[protein] + ADP + H(+). The enzyme catalyses L-threonyl-[protein] + ATP = O-phospho-L-threonyl-[protein] + ADP + H(+). May play a role in sperm motility, especially in the regulation of flagellar function. This Mus musculus (Mouse) protein is Sperm motility kinase 1 (Smok1).